The following is a 287-amino-acid chain: Pirin-1 (287 aa).

At threonine 2 the chain carries N-acetylthreonine.

The protein belongs to the pirin family. In terms of assembly, interacts with the G protein alpha-1 subunit GPA1. Interacts with NFYB6 and NFYB9.

Its subcellular location is the nucleus. Involved in abscisic acid signal transduction. Plays a role in seed germination and early seedling development. Involved in the blue light (BL) signaling. The sequence is that of Pirin-1 (PRN1) from Arabidopsis thaliana (Mouse-ear cress).